We begin with the raw amino-acid sequence, 465 residues long: Phosphatidylserine synthase 1 (465 aa).

Topologically, residues 1–35 are cytoplasmic; the sequence is MATTFRSQTLSKDDVNYRMHFRMINEQQVEDITIQ. Residues 36–56 form a helical membrane-spanning segment; sequence FFYKPHTISLLTVTVLSLMYF. The Lumenal portion of the chain corresponds to 57–70; sequence AFTRDDGDPDSNLR. Residues 71-91 form a helical membrane-spanning segment; it reads VGLILLVSFFLVISVLAFPNG. Residues 92–102 lie on the Cytoplasmic side of the membrane; the sequence is PFTRPHPAIWR. Residues 103-123 traverse the membrane as a helical segment; it reads IVFGLSVLYFLFLVFIIFLNW. The Lumenal segment spans residues 124 to 286; sequence DQVKALMFWL…WLDPKSSLQR (163 aa). The helical transmembrane segment at 287–307 threads the bilayer; sequence VMGVYLFMIIWQLTELNTFFL. The Cytoplasmic portion of the chain corresponds to 308 to 309; sequence KH. Residues 310–330 traverse the membrane as a helical segment; that stretch reads IFVFPACHALSWCRILFIGII. Over 331–355 the chain is Lumenal; that stretch reads TAPTVRQYYAYLTDTQCKRVGTQCW. The helical transmembrane segment at 356–376 threads the bilayer; that stretch reads VFGAIAFLEALACIKFGQDLF. At 377-380 the chain is on the cytoplasmic side; the sequence is SKTQ. A helical membrane pass occupies residues 381-401; the sequence is ILYVILWLVCLAFITFLCLYV. Residues 402–465 lie on the Lumenal side of the membrane; that stretch reads MVWYAENYGP…DSRTINGMEK (64 aa). A disordered region spans residues 446–465; the sequence is CSTRKRRDSGDSRTINGMEK.

Belongs to the phosphatidyl serine synthase family.

The protein resides in the endoplasmic reticulum membrane. It catalyses the reaction a 1,2-diacyl-sn-glycero-3-phosphoethanolamine + L-serine = a 1,2-diacyl-sn-glycero-3-phospho-L-serine + ethanolamine. The catalysed reaction is a 1,2-diacyl-sn-glycero-3-phosphocholine + L-serine = a 1,2-diacyl-sn-glycero-3-phospho-L-serine + choline. The protein operates within phospholipid metabolism; phosphatidylserine biosynthesis. Functionally, catalyzes a base-exchange reaction in which the polar head group of phosphatidylethanolamine (PE) or phosphatidylcholine (PC) is replaced by L-serine. Catalyzes mainly the conversion of phosphatidylcholine but also converts, in vitro and to a lesser extent, phosphatidylethanolamine. The protein is Phosphatidylserine synthase 1 (ptdss1) of Danio rerio (Zebrafish).